The sequence spans 267 residues: 4-hydroxy-tetrahydrodipicolinate reductase (267 aa).

NAD(+)-binding positions include 9-14 (GVSGRM) and Asp-35. NADP(+) is bound at residue Arg-36. Residues 98–100 (GTT) and 122–125 (APNM) each bind NAD(+). The active-site Proton donor/acceptor is His-155. Residue His-156 participates in (S)-2,3,4,5-tetrahydrodipicolinate binding. The active-site Proton donor is Lys-159. 165 to 166 (GT) serves as a coordination point for (S)-2,3,4,5-tetrahydrodipicolinate.

This sequence belongs to the DapB family.

The protein resides in the cytoplasm. It carries out the reaction (S)-2,3,4,5-tetrahydrodipicolinate + NAD(+) + H2O = (2S,4S)-4-hydroxy-2,3,4,5-tetrahydrodipicolinate + NADH + H(+). The enzyme catalyses (S)-2,3,4,5-tetrahydrodipicolinate + NADP(+) + H2O = (2S,4S)-4-hydroxy-2,3,4,5-tetrahydrodipicolinate + NADPH + H(+). Its pathway is amino-acid biosynthesis; L-lysine biosynthesis via DAP pathway; (S)-tetrahydrodipicolinate from L-aspartate: step 4/4. In terms of biological role, catalyzes the conversion of 4-hydroxy-tetrahydrodipicolinate (HTPA) to tetrahydrodipicolinate. In Thiobacillus denitrificans (strain ATCC 25259 / T1), this protein is 4-hydroxy-tetrahydrodipicolinate reductase.